The sequence spans 830 residues: FYN-binding protein 1 (830 aa).

The tract at residues M1–K501 is disordered. K13 carries the N6-acetyllysine modification. Polar residues predominate over residues N15 to A55. Phosphoserine is present on residues S38 and S56. Positions T79–K89 are enriched in basic and acidic residues. Residue S233 is modified to Phosphoserine. 2 stretches are compositionally biased toward basic and acidic residues: residues P248–G259 and N284–I296. S329 carries the phosphoserine modification. The span at Q330–A339 shows a compositional bias: basic and acidic residues. Composition is skewed to pro residues over residues K344–P362 and L391–A407. Residues P347–T447 are interaction with SKAP1. Positions L450–I464 are enriched in acidic residues. The residue at position 456 (S456) is a Phosphoserine. Residues Y461 to I464 carry the SH2-binding motif. Residues E465–R500 show a composition bias toward basic and acidic residues. The stretch at E465 to K502 forms a coiled coil. Positions K479 to R486 match the Nuclear localization signal motif. The 62-residue stretch at Q510 to D571 folds into the SH3 1 domain. Y570 bears the Phosphotyrosine mark. S572 carries the post-translational modification Phosphoserine. Residues Y595–V598 carry the SH2-binding; to LCP2 motif. Disordered stretches follow at residues Q601–T646 and K660–E739. Over residues A621–D636 the composition is skewed to acidic residues. Positions Y626–I629 match the SH2-binding; to FYN motif. The segment covering K660 to E675 has biased composition (basic and acidic residues). Positions V693–A703 are enriched in acidic residues. Y698 is subject to Phosphotyrosine. Residues T722–E739 are compositionally biased toward basic and acidic residues. The short motif at L732–E739 is the Nuclear localization signal element. In terms of domain architecture, SH3 2 spans K747 to G815.

As to quaternary structure, part of a complex consisting of SKAP2, FYB1 and PTPNS1. Part of a complex consisting of SKAP2, FYB1 and LILRB3. Part of a complex consisting of SKAP1, FYB1 and CLNK. Interacts with CLNK (via its SH2 domain) and FYN; this interaction allows SKAP1 and FYB1 to recruit FYN to the complex, thus promoting the phosphorylation of CLNK by FYN. Interacts with FYN. Interacts with LCP2. Interacts with SKAP1. Interacts with SKAP2. Interacts with FASLG. Interacts with EVL. Interacts with TMEM47. Interacts with LCK. Post-translationally, T-cell receptor ligation leads to increased tyrosine phosphorylation.

It localises to the cytoplasm. Its subcellular location is the nucleus. The protein localises to the cell junction. Its function is as follows. Acts as an adapter protein of the FYN and LCP2 signaling cascades in T-cells. May play a role in linking T-cell signaling to remodeling of the actin cytoskeleton. Modulates the expression of IL2. Involved in platelet activation. Prevents the degradation of SKAP1 and SKAP2. May be involved in high affinity immunoglobulin epsilon receptor signaling in mast cells. This Rattus norvegicus (Rat) protein is FYN-binding protein 1.